A 376-amino-acid polypeptide reads, in one-letter code: MDISSDESDDWFMESLNAYRDLHLFQLEHPTKVIEWMGDKSICVAGYTGARSEILELLLPLKLYAGDNQGLCAERDFKVKHGGFSEEPVECLIHIPGTRCLVTSGNSNTLQIWDIGGDDSDVIKMTRVINLKSPSAKGSKITPGFTDSPTVLHGSCISDIQLTEIATGRVLHTVGKESSDSVSGLQFVNAFVFLICSTNGALLLGDTRDPSTCHYPLEESNSGLRWSFGLRSDSSQSEPSCCKVARLSSSGHMLLSDLRDLKSPFCQTQIKVPQSASKNHFMNISWAPVLDKCLSVSGFDGTVHIYNTNNWSTESSSPQPIFSHRGHEMSQEAKSSTSPAVVTAHSWHPSRPKTLLSAATDGSLHVWDWVDKITDR.

WD repeat units lie at residues 84 to 123 (FSEE…SDVI), 276 to 316 (ASKN…TESS), and 337 to 376 (TSPA…ITDR). A disordered region spans residues 316–336 (SSPQPIFSHRGHEMSQEAKSS).

It belongs to the WD repeat WDR73 family.

The protein localises to the cytoplasm. It is found in the cytoskeleton. It localises to the spindle. The protein resides in the spindle pole. Its subcellular location is the cleavage furrow. In terms of biological role, component of a multiprotein complex required for the assembly of the RNA endonuclease module of the integrator complex. Associates with ints9 and ints11 in the cytoplasm, stabilizing the ints9-ints11 heterodimer and blocking the active site of ints11. Brat1 then joins the complex and plugs the active site of ints11, leading to wdr73 release and nuclear import of ints9 and ints11. This chain is Integrator complex assembly factor WDR73 (wdr73), found in Danio rerio (Zebrafish).